The primary structure comprises 284 residues: Agamous-like MADS-box protein AGL49 (284 aa).

Positions 1–20 (MAPRQKKPNKSDDDDGDLHR) are disordered. The MADS-box domain maps to 21 to 66 (KKQSFFKQRFPGFKKKASELSVLCGNSVGFICYGPDNDLHVWPQSQ).

Interacts with MEE14/CBP1.

It localises to the nucleus. Its function is as follows. Probable transcription factor that may function in the maintenance of the proper function of the central cell in pollen tube attraction. The chain is Agamous-like MADS-box protein AGL49 from Arabidopsis thaliana (Mouse-ear cress).